A 709-amino-acid polypeptide reads, in one-letter code: Fatty acid oxidation complex subunit alpha (709 aa).

Positions 1–188 (MEKTFNLTRR…KMGLVNDVVP (188 aa)) are enoyl-CoA hydratase. Residues 308–709 (RKVKKAVILG…EMAAEKTRFF (402 aa)) form a 3-hydroxyacyl-CoA dehydrogenase region.

It in the N-terminal section; belongs to the enoyl-CoA hydratase/isomerase family. This sequence in the central section; belongs to the 3-hydroxyacyl-CoA dehydrogenase family. As to quaternary structure, heterotetramer of two alpha chains (FadJ) and two beta chains (FadI).

The protein resides in the cytoplasm. The enzyme catalyses a (3S)-3-hydroxyacyl-CoA = a (2E)-enoyl-CoA + H2O. It catalyses the reaction a 4-saturated-(3S)-3-hydroxyacyl-CoA = a (3E)-enoyl-CoA + H2O. It carries out the reaction a (3S)-3-hydroxyacyl-CoA + NAD(+) = a 3-oxoacyl-CoA + NADH + H(+). The catalysed reaction is (3S)-3-hydroxybutanoyl-CoA = (3R)-3-hydroxybutanoyl-CoA. Its pathway is lipid metabolism; fatty acid beta-oxidation. In terms of biological role, catalyzes the formation of a hydroxyacyl-CoA by addition of water on enoyl-CoA. Also exhibits 3-hydroxyacyl-CoA epimerase and 3-hydroxyacyl-CoA dehydrogenase activities. In Shewanella sp. (strain MR-7), this protein is Fatty acid oxidation complex subunit alpha.